Reading from the N-terminus, the 423-residue chain is NDP-N-acetyl-D-galactosaminuronic acid dehydrogenase (423 aa).

11–28 provides a ligand contact to NAD(+); that stretch reads TISVVGLGYIGLPTATVL. The Proton donor/acceptor role is filled by Lys-218. Cys-272 acts as the Nucleophile in catalysis.

This sequence belongs to the UDP-glucose/GDP-mannose dehydrogenase family.

Functionally, probably involved in synthesis of sugar components of EPS I, by converting NDP-N-acetyl-D-galactosamine into NDP-N-acetyl-D-galactosaminuronic acid. This chain is NDP-N-acetyl-D-galactosaminuronic acid dehydrogenase (epsD), found in Ralstonia solanacearum (Pseudomonas solanacearum).